The following is a 451-amino-acid chain: Probable beta-1,4-xylosyltransferase GT43E (451 aa).

Over methionine 1–arginine 88 the chain is Cytoplasmic. The helical; Signal-anchor for type II membrane protein transmembrane segment at leucine 89–phenylalanine 109 threads the bilayer. The Lumenal portion of the chain corresponds to serine 110–threonine 451. N-linked (GlcNAc...) asparagine glycans are attached at residues asparagine 260 and asparagine 366.

The protein belongs to the glycosyltransferase 43 family.

It is found in the golgi apparatus membrane. Its function is as follows. Probable beta-1,4-xylosyltransferase involved in xylan biosynthesis in cell walls. In Oryza sativa subsp. japonica (Rice), this protein is Probable beta-1,4-xylosyltransferase GT43E.